Reading from the N-terminus, the 515-residue chain is Endoglucanase 23 (515 aa).

An N-terminal signal peptide occupies residues Met1–Ala29. Asp95 acts as the Nucleophile in catalysis. N-linked (GlcNAc...) asparagine glycosylation is found at Asn178, Asn375, and Asn384. Residue His426 is part of the active site. Asn452 carries an N-linked (GlcNAc...) asparagine glycan. Catalysis depends on residues Asp477 and Glu486.

This sequence belongs to the glycosyl hydrolase 9 (cellulase E) family.

The protein localises to the secreted. The enzyme catalyses Endohydrolysis of (1-&gt;4)-beta-D-glucosidic linkages in cellulose, lichenin and cereal beta-D-glucans.. The chain is Endoglucanase 23 (GLU12) from Oryza sativa subsp. japonica (Rice).